A 486-amino-acid chain; its full sequence is Glutamate--tRNA ligase 1 (486 aa).

The 'HIGH' region motif lies at 9–19 (PSPTGMLHIGG). The 'KMSKS' region signature appears at 259-263 (KLSKR). K262 contacts ATP.

It belongs to the class-I aminoacyl-tRNA synthetase family. Glutamate--tRNA ligase type 1 subfamily. Monomer.

The protein resides in the cytoplasm. The enzyme catalyses tRNA(Glu) + L-glutamate + ATP = L-glutamyl-tRNA(Glu) + AMP + diphosphate. In terms of biological role, catalyzes the attachment of glutamate to tRNA(Glu) in a two-step reaction: glutamate is first activated by ATP to form Glu-AMP and then transferred to the acceptor end of tRNA(Glu). The polypeptide is Glutamate--tRNA ligase 1 (Hyphomonas neptunium (strain ATCC 15444)).